Consider the following 461-residue polypeptide: Photosystem II CP43 reaction center protein (461 aa).

The Cytoplasmic portion of the chain corresponds to 1–48 (MVTLSSNSIFATNRDQESSGFAWWAGNARLINLSGKLLGAHVAHAGLI). Residues 49–71 (VFWAGAMTLFELAHFIPEKPMYE) form a helical membrane-spanning segment. Residues 72–111 (QGLILIPHIATLGWGVGPGGEVVDTFPFFVVGVVHLISSA) lie on the Lumenal side of the membrane. A helical transmembrane segment spans residues 112–133 (VLGFGGVYHAIRGPETLEEYSS). Over 134-155 (FFGYDWKDKNKMTTILGFHLIV) the chain is Cytoplasmic. Residues 156-178 (LGIGALLLVAKAMFFGGLYDTWA) traverse the membrane as a helical segment. At 179 to 232 (PGGGDVRVITNPTLDPRVIFGYLLKSPFGGEGWIVSVNNLEDVVGGHIWIGLIC) the chain is on the lumenal side. A helical transmembrane segment spans residues 233–253 (IAGGIWHILTTPFGWARRAFI). At 254–268 (WSGEAYLSYSLGALS) the chain is on the cytoplasmic side. A helical membrane pass occupies residues 269–289 (MMGFIATCFVWFNNTVYPSEF). At 290–424 (YGPTGPEASQ…ATSHFVLAFF (135 aa)) the chain is on the lumenal side. Glu355 is a binding site for [CaMn4O5] cluster. Residues 425–449 (FLVGHLWHAGRARAAAAGFEKGIDR) traverse the membrane as a helical segment. Topologically, residues 450–461 (ESEPVLSMPSLD) are cytoplasmic.

PSII is composed of 1 copy each of membrane proteins PsbA, PsbB, PsbC, PsbD, PsbE, PsbF, PsbH, PsbI, PsbJ, PsbK, PsbL, PsbM, PsbT, PsbX, PsbY, PsbZ, Psb30/Ycf12, peripheral proteins PsbO, CyanoQ (PsbQ), PsbU, PsbV and a large number of cofactors. It forms dimeric complexes. Part of a photosystem II (PSII) assembly intermediate complex PSII-I; crystallized from a strain deleted of psbJ, it forms monomeric PSII before addition of the oxygen evolving complex. PSII-I includes 3 assembly factors not found in mature PSII (Psb27, Psb28 and Psb34), and CP43 (this protein) is not in its mature conformation. Binds multiple chlorophylls and provides some of the ligands for the Ca-4Mn-5O cluster of the oxygen-evolving complex. It may also provide a ligand for a Cl- that is required for oxygen evolution. PSII binds additional chlorophylls, carotenoids and specific lipids. serves as cofactor.

Its subcellular location is the cellular thylakoid membrane. In terms of biological role, one of the components of the core complex of photosystem II (PSII). It binds chlorophyll and helps catalyze the primary light-induced photochemical processes of PSII. PSII is a light-driven water:plastoquinone oxidoreductase, using light energy to abstract electrons from H(2)O, generating O(2) and a proton gradient subsequently used for ATP formation. This is Photosystem II CP43 reaction center protein from Thermosynechococcus vestitus (strain NIES-2133 / IAM M-273 / BP-1).